A 498-amino-acid chain; its full sequence is MGGGVSYVGWLEKSETEKLLEYIEEISCASDQVEKYKLDIAQLEEDLKEKDREILCLKQSLEEKVSFSKQIEDLTVKCQLLEAERDDLVSKDRERAESLSAEMQVLTEKLLLERQEYEKLQQNELQSQSLLQQEKELSAHLQQQLCSFQEEMTSERNVFKEQLKLALDELDAVQQKEEQSEKLVKQLEEETKSTAEQLRRLDDLLREKEIELEKRTAAHAQATVIAQEKYSDTAQTLRDVTAQLESYKSSTLKEIEDLKLENLTLQEKVAMAEKRVEDVQQQILTAESTNQEYAKVVQDLQNSSTLKEAEIKEITSSYLEKITDLQNQLRQQNEDFRKQLEEEGAKMTEKETAVTELTMEINKWRLLYEELYDKTKPFQQQLDAFEAEKQALLNEHGATQEQLSKIRDSYAQLLGHQNLKQKIKHVVKLKDENSQLKSEVSKLRSQLAKRKQNELRLQGELDKALGIRHFDPPKAFCHESKENVTLKTPLKEGNPNCC.

The tract at residues 150 to 331 (EEMTSERNVF…ITDLQNQLRQ (182 aa)) is required for interaction with FAM83D. 2 N-linked (GlcNAc...) asparagine glycosylation sites follow: Asn262 and Asn302. Hyaluronic acid-binding stretches follow at residues 420 to 430 (KQKIKHVVKLK) and 442 to 451 (KLRSQLAKRK). A glycan (N-linked (GlcNAc...) asparagine) is linked at Asn483. The residue at position 488 (Thr488) is a Phosphothreonine.

Interacts with ANKRD26. Interacts with DYNLL1. Interacts with FAM83D/CHICA.

The protein resides in the cell surface. Its subcellular location is the cytoplasm. It localises to the cytoskeleton. The protein localises to the spindle. Functionally, receptor for hyaluronic acid (HA). Involved in cell motility. When hyaluronan binds to HMMR, the phosphorylation of a number of proteins, including the PTK2/FAK1 occurs. May also be involved in cellular transformation and metastasis formation, and in regulating extracellular-regulated kinase (ERK) activity. May act as a regulator of adipogenisis. In Rattus norvegicus (Rat), this protein is Hyaluronan-mediated motility receptor (Hmmr).